The chain runs to 466 residues: Glucose receptor protein git3 (466 aa).

5 consecutive transmembrane segments (helical) span residues 30-50 (LRIMVIIASAISIVFSLIAIF), 65-85 (IALFSVLFIRSIVQMIHPCLA), 101-121 (IGFFLLVLVRMTDYWIFINIL), 144-164 (HTVFTLSFVIPLTIGGLAFTN), and 192-212 (SFDYALSIAIIALQTCMFISI). Low complexity predominate over residues 262–285 (PSNSQSIYSSQSQPSPYSRPLLSS). The segment at 262-337 (PSNSQSIYSS…FKLSSPLTSD (76 aa)) is disordered. A compositionally biased stretch (polar residues) spans 292 to 305 (PGSQSTPANLNQSG). Basic and acidic residues predominate over residues 308 to 327 (FEQDFRDSPNRTNGLEDHTS). The next 2 helical transmembrane spans lie at 372 to 392 (FAYPAIFIFMWILPQIQIIVI) and 409 to 429 (VAVFADNFVAIFIALSDFIWI).

The protein belongs to the G-protein coupled receptor GPR1/git3 family. In terms of assembly, interacts with G protein alpha subunit gpa2; the interaction is direct and leads to activation of gpa2 upon glucose stimulation.

It is found in the membrane. G protein-coupled receptor (GPCR) that senses glucose and signals via the heterotrimeric G protein alpha subunit gpa2 to activate adenylate cyclase and PKA signaling, and suppress sexual development and gluconeogenesis. The sequence is that of Glucose receptor protein git3 (git3) from Schizosaccharomyces pombe (strain 972 / ATCC 24843) (Fission yeast).